A 302-amino-acid chain; its full sequence is MYTELISHKIAELKKERKAVILAHNYQLGEIQEAADFVGDSLELARKAANIDAEVIVFCGVHFMAETAAILSPEKTVLAPEPKAGCPMADMISGAELREFKARYPGLPVVCYVNSTAEVKAESDICCTSANAVKVVESLKSDTVLFVPDQYLGAFVQAHTAKKIISWPGYCPCHARIKPEDILNLKKHYPKAKVVVHPESRPEVTALADGVLSTGQMVTYAARADVKELIVGTEIGMLYRLRKENPNKLFIPVSEQAVCANMKMTTLPKLLASLENMQTVVSVPEEIRRKAVGAVERMLKVT.

Residues H24 and S41 each coordinate iminosuccinate. C86 is a binding site for [4Fe-4S] cluster. Residues 112 to 114 (YVN) and S129 contribute to the iminosuccinate site. A [4Fe-4S] cluster-binding site is contributed by C171. Residues 197–199 (HPE) and T214 each bind iminosuccinate. [4Fe-4S] cluster is bound at residue C259.

This sequence belongs to the quinolinate synthase family. Type 2 subfamily. It depends on [4Fe-4S] cluster as a cofactor.

The protein resides in the cytoplasm. The enzyme catalyses iminosuccinate + dihydroxyacetone phosphate = quinolinate + phosphate + 2 H2O + H(+). Its pathway is cofactor biosynthesis; NAD(+) biosynthesis; quinolinate from iminoaspartate: step 1/1. Catalyzes the condensation of iminoaspartate with dihydroxyacetone phosphate to form quinolinate. The sequence is that of Quinolinate synthase from Dehalococcoides mccartyi (strain ATCC BAA-2266 / KCTC 15142 / 195) (Dehalococcoides ethenogenes (strain 195)).